The following is a 61-amino-acid chain: Temporin-ALj (61 aa).

The N-terminal stretch at 1-22 is a signal peptide; that stretch reads MFTLKKSLLLLFFLATINLSFC. Residues 23–46 constitute a propeptide that is removed on maturation; it reads EQERNAEEERRDEPDERNAEVEKR. At Leu59 the chain carries Leucine amide.

Belongs to the frog skin active peptide (FSAP) family. Temporin subfamily. As to expression, expressed by the skin glands.

It is found in the secreted. Its function is as follows. Antimicrobial peptide with activity against Gram-positive and Gram-negative bacteria and against fungi. Has been tested against S.aureus (MIC=7.5 ug/mL), B.pumilus (MIC=15.0 ug/mL), B.cereus (MIC=75.0 ug/mL), E.coli (MIC=15.0 ug/mL), B.dysenteriae (MIC=30.0 ug/mL), A.cacoaceticus (MIC=60.0 ug/mL), P.aeruginosa (MIC=7.5 ug/mL) and C.albicans (MIC=5.0 ug/mL). Also shows a weak hemolytic activity. The chain is Temporin-ALj from Amolops loloensis (Lolokou Sucker Frog).